Reading from the N-terminus, the 310-residue chain is Transcription factor RAX3 (310 aa).

HTH myb-type domains follow at residues 9 to 62 (KANV…LNYL) and 63 to 117 (RPNI…KKKL). 2 consecutive DNA-binding regions (H-T-H motif) follow at residues 38 to 62 (WIAL…LNYL) and 90 to 113 (WSII…NTRL).

As to expression, ubiquitous.

The protein resides in the nucleus. Its function is as follows. Transcription activator. Positively regulates axillary meristems (AMs) formation and development, especially during inflorescence. This Arabidopsis thaliana (Mouse-ear cress) protein is Transcription factor RAX3 (RAX3).